A 560-amino-acid polypeptide reads, in one-letter code: Mannosyl-oligosaccharide 1,2-alpha-mannosidase MNS1 (560 aa).

At 1–27 the chain is on the cytoplasmic side; sequence MARSRSISGYGIWKYLNPAYYLRRPRR. Residues 28–47 traverse the membrane as a helical; Signal-anchor for type II membrane protein segment; it reads LALLFIVFVSVSMLVWDRIN. A coiled-coil region spans residues 47–80; the sequence is NLAREHEVEVFKLNEEVSRLEQMLEELNGGVGNK. Residues 48–560 are Lumenal-facing; it reads LAREHEVEVF…QRKFGHQINV (513 aa). The active-site Proton donor is E179. Residue D312 is part of the active site. Residue N326 is glycosylated (N-linked (GlcNAc...) asparagine). A disulfide bridge links C377 with C409. E423 functions as the Proton donor in the catalytic mechanism. E445 is an active-site residue. N-linked (GlcNAc...) asparagine glycosylation is present at N459. T529 lines the Ca(2+) pocket.

This sequence belongs to the glycosyl hydrolase 47 family. Requires Ca(2+) as cofactor. The cofactor is Mn(2+). It depends on Mg(2+) as a cofactor. As to expression, expressed in flowers, siliques, stems, leaves, roots, pollen grains, shoot apical meristems, hypocotyls and upper region of the root.

The protein resides in the golgi apparatus membrane. The catalysed reaction is N(4)-(alpha-D-Man-(1-&gt;2)-alpha-D-Man-(1-&gt;2)-alpha-D-Man-(1-&gt;3)-[alpha-D-Man-(1-&gt;2)-alpha-D-Man-(1-&gt;3)-[alpha-D-Man-(1-&gt;2)-alpha-D-Man-(1-&gt;6)]-alpha-D-Man-(1-&gt;6)]-beta-D-Man-(1-&gt;4)-beta-D-GlcNAc-(1-&gt;4)-beta-D-GlcNAc)-L-asparaginyl-[protein] (N-glucan mannose isomer 9A1,2,3B1,2,3) + 4 H2O = N(4)-(alpha-D-Man-(1-&gt;3)-[alpha-D-Man-(1-&gt;3)-[alpha-D-Man-(1-&gt;6)]-alpha-D-Man-(1-&gt;6)]-beta-D-Man-(1-&gt;4)-beta-D-GlcNAc-(1-&gt;4)-beta-D-GlcNAc)-L-asparaginyl-[protein] (N-glucan mannose isomer 5A1,2) + 4 beta-D-mannose. It carries out the reaction N(4)-(alpha-D-Man-(1-&gt;2)-alpha-D-Man-(1-&gt;2)-alpha-D-Man-(1-&gt;3)-[alpha-D-Man-(1-&gt;3)-[alpha-D-Man-(1-&gt;2)-alpha-D-Man-(1-&gt;6)]-alpha-D-Man-(1-&gt;6)]-beta-D-Man-(1-&gt;4)-beta-D-GlcNAc-(1-&gt;4)-beta-D-GlcNAc)-L-asparaginyl-[protein] (N-glucan mannose isomer 8A1,2,3B1,3) + 3 H2O = N(4)-(alpha-D-Man-(1-&gt;3)-[alpha-D-Man-(1-&gt;3)-[alpha-D-Man-(1-&gt;6)]-alpha-D-Man-(1-&gt;6)]-beta-D-Man-(1-&gt;4)-beta-D-GlcNAc-(1-&gt;4)-beta-D-GlcNAc)-L-asparaginyl-[protein] (N-glucan mannose isomer 5A1,2) + 3 beta-D-mannose. The enzyme catalyses N(4)-(alpha-D-Man-(1-&gt;2)-alpha-D-Man-(1-&gt;2)-alpha-D-Man-(1-&gt;3)-[alpha-D-Man-(1-&gt;2)-alpha-D-Man-(1-&gt;3)-[alpha-D-Man-(1-&gt;2)-alpha-D-Man-(1-&gt;6)]-alpha-D-Man-(1-&gt;6)]-beta-D-Man-(1-&gt;4)-beta-D-GlcNAc-(1-&gt;4)-beta-D-GlcNAc)-L-asparaginyl-[protein] (N-glucan mannose isomer 9A1,2,3B1,2,3) + H2O = N(4)-(alpha-D-Man-(1-&gt;2)-alpha-D-Man-(1-&gt;2)-alpha-D-Man-(1-&gt;3)-[alpha-D-Man-(1-&gt;3)-[alpha-D-Man-(1-&gt;2)-alpha-D-Man-(1-&gt;6)]-alpha-D-Man-(1-&gt;6)]-beta-D-Man-(1-&gt;4)-beta-D-GlcNAc-(1-&gt;4)-beta-D-GlcNAc)-L-asparaginyl-[protein] (N-glucan mannose isomer 8A1,2,3B1,3) + beta-D-mannose. It participates in protein modification; protein glycosylation. With respect to regulation, inhibited by kifunensine and 1-deoxymannojirimycin, but not by swainsonine. Its function is as follows. Class I alpha-mannosidase essential for early N-glycan processing. Progressively trims alpha-1,2-linked mannose residues. Produces Man(5)GlcNAc(2) from Man(8)GlcNAc(2), but only Man(6)GlcNAc(2) from Man(9)GlcNAc(2). Has difficulty acting on the terminal mannose of the b-branch. Involved in root development and cell wall biosynthesis. This is Mannosyl-oligosaccharide 1,2-alpha-mannosidase MNS1 (MNS1) from Arabidopsis thaliana (Mouse-ear cress).